A 295-amino-acid chain; its full sequence is MSSSRPGFSCSWLPYLLVLPQLAITAVFFLWPAGEALWYSVQMLDPFGLSSEFVGLSNFIALFHDEYYLASFYTTLIFSSLVAGIGLVVSLFLAAMVDYVLRGSRIYQTLMILPYAVAPAVAAVLWIFLFNPGLGLITHFLASLGYNWNHAQNSGQAMFLVVLASVWKQISYNFLFFLAALQSIPRSLVEAAAIDGAGPVRRFFNLVLPLISPVSFFLLVVNLVYAFFDTFPVIDAATGGGPMQATTTLIYKIYREGFAGLDLSSSAAQSVVLMLLVIGLTVIQFRFVERKVRYQ.

The Cytoplasmic segment spans residues 1–11 (MSSSRPGFSCS). The helical transmembrane segment at 12–32 (WLPYLLVLPQLAITAVFFLWP) threads the bilayer. Residues 33–80 (AGEALWYSVQMLDPFGLSSEFVGLSNFIALFHDEYYLASFYTTLIFSS) are Periplasmic-facing. An ABC transmembrane type-1 domain is found at 72–284 (FYTTLIFSSL…LLVIGLTVIQ (213 aa)). The chain crosses the membrane as a helical span at residues 81–101 (LVAGIGLVVSLFLAAMVDYVL). Residues 102 to 109 (RGSRIYQT) are Cytoplasmic-facing. A helical transmembrane segment spans residues 110-130 (LMILPYAVAPAVAAVLWIFLF). Topologically, residues 131–157 (NPGLGLITHFLASLGYNWNHAQNSGQA) are periplasmic. Residues 158–178 (MFLVVLASVWKQISYNFLFFL) traverse the membrane as a helical segment. Residues 179–207 (AALQSIPRSLVEAAAIDGAGPVRRFFNLV) are Cytoplasmic-facing. The helical transmembrane segment at 208-228 (LPLISPVSFFLLVVNLVYAFF) threads the bilayer. Residues 229–262 (DTFPVIDAATGGGPMQATTTLIYKIYREGFAGLD) lie on the Periplasmic side of the membrane. A helical transmembrane segment spans residues 263–283 (LSSSAAQSVVLMLLVIGLTVI). Topologically, residues 284 to 295 (QFRFVERKVRYQ) are cytoplasmic.

The protein belongs to the binding-protein-dependent transport system permease family. UgpAE subfamily. In terms of assembly, the complex is composed of two ATP-binding proteins (UgpC), two transmembrane proteins (UgpA and UgpE) and a solute-binding protein (UgpB).

It localises to the cell inner membrane. Part of the ABC transporter complex UgpBAEC involved in sn-glycerol-3-phosphate (G3P) import. Probably responsible for the translocation of the substrate across the membrane. This chain is sn-glycerol-3-phosphate transport system permease protein UgpA (ugpA), found in Yersinia enterocolitica serotype O:8 / biotype 1B (strain NCTC 13174 / 8081).